Consider the following 244-residue polypeptide: Trypsin (244 aa).

Residues 1 to 15 form the signal peptide; it reads MKFLVILVLLGAAVA. The propeptide at 16-21 is activation peptide; it reads FEDDDK. In terms of domain architecture, Peptidase S1 spans 22–242; it reads IVGGFTCAKN…FVTWIQSTIS (221 aa). 6 disulfide bridges follow: Cys28/Cys158, Cys46/Cys62, Cys130/Cys231, Cys137/Cys204, Cys169/Cys183, and Cys194/Cys218. The active-site Charge relay system is His61. Positions 73, 75, and 83 each coordinate Ca(2+). The active-site Charge relay system is Asp105. Catalysis depends on Ser198, which acts as the Charge relay system.

Belongs to the peptidase S1 family. It depends on Ca(2+) as a cofactor.

Its subcellular location is the secreted. It localises to the extracellular space. It carries out the reaction Preferential cleavage: Arg-|-Xaa, Lys-|-Xaa.. The chain is Trypsin from Xenopus laevis (African clawed frog).